A 524-amino-acid chain; its full sequence is Protein tweety homolog 3 (524 aa).

Topologically, residues 1–42 are extracellular; it reads MAGVSYAAPWWVSLLHRLPHFDLRWEATSSQFRPEDADYQQA. A helical membrane pass occupies residues 43-63; the sequence is LLLLGATALACLALDLLFLLF. Over 64-86 the chain is Cytoplasmic; the sequence is YSFWLCCRRRKTDEHLDADCCCT. Residues 87-107 form a helical membrane-spanning segment; sequence AWCVIITTLVCSAGIAVGFYG. Residues 108–211 are Extracellular-facing; the sequence is NGETSDGIHR…VDLYDWYRWL (104 aa). Residues Glu110 and Asp113 each contribute to the Ca(2+) site. Asn126 and Asn144 each carry an N-linked (GlcNAc...) asparagine glycan. Residues 212 to 232 form a helical membrane-spanning segment; it reads GYLGLLLLDVIICLLVLVGLI. Topologically, residues 233–236 are cytoplasmic; that stretch reads RSSK. The helical transmembrane segment at 237 to 257 threads the bilayer; the sequence is GILVGVCLLGVLALVISWGAL. Topologically, residues 258–386 are extracellular; it reads GLELAVSVGS…LTGFCYDGVE (129 aa). 2 disulfide bridges follow: Cys271-Cys381 and Cys299-Cys366. An N-linked (GlcNAc...) asparagine glycan is attached at Asn351. The chain crosses the membrane as a helical span at residues 387–407; sequence GLIYLALFSFVTALMFSSIVC. Residues 408-524 are Cytoplasmic-facing; the sequence is SIPHTWQQKR…PRPDSSGSGH (117 aa). 2 disordered regions span residues 413 to 435 and 485 to 524; these read WQQK…RQAH and RCEN…GSGH. The residue at position 496 (Ser496) is a Phosphoserine. The short motif at 498 to 501 is the PY-motif; mediates interaction with NEDD4L element; that stretch reads PPSY. A compositionally biased stretch (polar residues) spans 501 to 524; the sequence is YTSSMRAKYLATSQPRPDSSGSGH. Residues Ser504 and Ser522 each carry the phosphoserine modification.

The protein belongs to the tweety family. Homotetramer; disulfide-linked. Forms cis-homodimers in the presence of Ca(2+). Interacts with NEDD4L. Ubiquitinated by NEDD4L. In terms of processing, N-glycosylated. As to expression, expressed in excitable tissues. Expressed in the brain, heart, skeletal muscle, colon, spleen, kidney and peripheral blood leukocytes. Also expressed in fat, the pancreas, thymus, and uterus.

The protein localises to the cell membrane. It carries out the reaction chloride(in) = chloride(out). The catalysed reaction is L-glutamate(out) = L-glutamate(in). Inhibited by (4-[(2-butyl-6,7-dichloro-2- cyclopentyl-2,3-dihydro-1-oxo-1H-inden-5-yl)oxy]butanoic acid), genistein and PD98059 (MEK1 inhibitor). Functionally, calcium-independent, swelling-dependent volume-regulated anion channel (VRAC-swell) which plays a pivotal role in the process of regulatory volume decrease (RVD) in the brain through the efflux of anions like chloride and organic osmolytes like glutamate. Probable large-conductance Ca(2+)-activated chloride channel. This Mus musculus (Mouse) protein is Protein tweety homolog 3 (Ttyh3).